Reading from the N-terminus, the 2130-residue chain is DNA polymerase zeta catalytic subunit (2130 aa).

4 disordered regions span residues 528–635, 734–891, 927–954, and 1189–1243; these read PAES…TGTL, GCEI…HDEA, FTPS…SNTP, and QAKD…SAAQ. A compositionally biased stretch (low complexity) spans 553-574; that stretch reads TPIKSISSKSKSSPSKTPTTPI. A compositionally biased stretch (polar residues) spans 620 to 629; sequence PRLSLQLDQG. Residues 735-753 show a composition bias toward basic and acidic residues; it reads CEIERPHRSEGSALDELKP. Polar residues-rich tracts occupy residues 771–786, 794–808, and 818–835; these read SEIQ…TSLD, LSQS…SMNG, and DSSS…SVSE. A compositionally biased stretch (basic and acidic residues) spans 840–860; that stretch reads LESKPKKSDETARSCDEKLQR. Positions 938 to 954 are enriched in polar residues; that stretch reads TETTPQLSPKSNESNTP. Positions 1228-1243 are enriched in low complexity; it reads PSSQSSEQSVSSSAAQ. Residues Cys-2041, Cys-2045, Cys-2054, and Cys-2057 each contribute to the Zn(2+) site. The [4Fe-4S] cluster site is built by Cys-2086, Cys-2089, Cys-2098, and Cys-2103. A CysB motif motif is present at residues 2086-2103; sequence CQACCGRLGSLQCDSLDC.

Belongs to the DNA polymerase type-B family. In terms of assembly, catalytic subunit of the zeta DNA polymerase complex, which consists of PolZ1/DNApol-zeta and the accessory component PolZ2/Rev7. Interacts with the apurinic/apyrimidinic (AP) endonuclease Rrp1; the interaction is likely indirect and mediated via PolZ2. Requires [4Fe-4S] cluster as cofactor.

It catalyses the reaction DNA(n) + a 2'-deoxyribonucleoside 5'-triphosphate = DNA(n+1) + diphosphate. Inhibited by tetracyclic diterpene antibiotic aphidicolin. As the catalytic subunit of the DNA polymerase zeta complex, plays a crucial role in translesion DNA synthesis (TLS) and various DNA repair mechanisms. Lacks an intrinsic 3'-5' exonuclease activity and thus has no proofreading function. During homologous recombination (HR) repair, has a overlapping role with the error-prone translesion polymerase eta to initiate repair synthesis which is completed by end joining or another polymerase that can bind and reinitiate synthesis. May participate in the Rrp1-dependent base excision repair (BER) pathway responsible for repair of DNA lesions that gives rise to apurinic/apyrimidinic (AP) sites. Unlike mammalian orthologs, it is not an error-prone polymerase. The chain is DNA polymerase zeta catalytic subunit from Drosophila melanogaster (Fruit fly).